Consider the following 213-residue polypeptide: Adenylate kinase (213 aa).

14–19 (GSGKGT) serves as a coordination point for ATP. The segment at 34-63 (STGDLLRAIIREGTPNGLKAKAYLDKGAFV) is NMP. AMP is bound by residues threonine 35, arginine 40, 61–63 (AFV), 89–92 (GFPR), and glutamine 96. The LID stretch occupies residues 129-162 (SRFLCPSCSRIYNTSQGHTECPDCHVPLIRRSDD). Position 130 (arginine 130) interacts with ATP. Zn(2+) contacts are provided by cysteine 133 and cysteine 136. 139–140 (IY) provides a ligand contact to ATP. Zn(2+)-binding residues include cysteine 149 and cysteine 152. AMP-binding residues include arginine 159 and arginine 170. Residue asparagine 198 coordinates ATP.

It belongs to the adenylate kinase family. Monomer.

The protein resides in the cytoplasm. It catalyses the reaction AMP + ATP = 2 ADP. Its pathway is purine metabolism; AMP biosynthesis via salvage pathway; AMP from ADP: step 1/1. In terms of biological role, catalyzes the reversible transfer of the terminal phosphate group between ATP and AMP. Plays an important role in cellular energy homeostasis and in adenine nucleotide metabolism. This is Adenylate kinase from Chlamydia pneumoniae (Chlamydophila pneumoniae).